The sequence spans 188 residues: Chitin synthase 2 (188 aa).

This sequence belongs to the chitin synthase family.

The protein resides in the cell membrane. The catalysed reaction is [(1-&gt;4)-N-acetyl-beta-D-glucosaminyl](n) + UDP-N-acetyl-alpha-D-glucosamine = [(1-&gt;4)-N-acetyl-beta-D-glucosaminyl](n+1) + UDP + H(+). Functionally, polymerizes chitin, a structural polymer of the cell wall and septum, by transferring the sugar moiety of UDP-GlcNAc to the non-reducing end of the growing chitin polymer. The protein is Chitin synthase 2 (CHS2) of Exophiala jeanselmei (Dematiaceous fungus).